The sequence spans 385 residues: MGLVTCKQEREAELQNRQIDTQIRIENQANKRKIKMLLLGVTDSGKSTIVKQMRVNYLDGFNETEVVNAIFVIRNNIIDAFKNICNIILHSDITVTQEEKVLVKLFAYESGKIELMQEVDELNVINAVSGYECIKQFFERFAFHPMVPDHIHYFYPNLDRIASSNYVPTAEDLIHMRQTTLGVHEISFDYTKHIIRLIDVGGQKTERRKWIHFFEGVTAVMFVCSLASFNQTTEEEPKAFVWESSLNKVQNKVLVRSAGKAKVEKPGLINRLDESVDLFKSIRENSFLKMSNFMLFLNKKDLLTKKLTKVVFSDYFPDYKKWITNDNSDVSVAEFIENMFREGLEPEKRMYAHLTQATVTANIEGTFALCCDVIFGKNYEDTNLE.

Glycine 2 carries N-myristoyl glycine lipidation. Cysteine 6 carries S-palmitoyl cysteine lipidation. The region spanning 32–385 (RKIKMLLLGV…GKNYEDTNLE (354 aa)) is the G-alpha domain. The G1 motif stretch occupies residues 35–48 (KMLLLGVTDSGKST). GTP is bound by residues 40–47 (GVTDSGKS), 174–180 (IHMRQTT), 199–203 (DVGGQ), 298–301 (NKKD), and alanine 357. Mg(2+) is bound by residues serine 47 and threonine 180. Positions 172–180 (DLIHMRQTT) are G2 motif. The tract at residues 195 to 204 (IRLIDVGGQK) is G3 motif. The G4 motif stretch occupies residues 294–301 (MLFLNKKD). The tract at residues 355 to 360 (TQATVT) is G5 motif.

This sequence belongs to the G-alpha family. As to quaternary structure, g proteins are composed of 3 units; alpha, beta and gamma. The alpha chain contains the guanine nucleotide binding site.

Its function is as follows. Guanine nucleotide-binding proteins (G proteins) are involved as modulators or transducers in various transmembrane signaling systems. The polypeptide is Guanine nucleotide-binding protein alpha-5 subunit (gpa-5) (Caenorhabditis elegans).